Consider the following 5065-residue polypeptide: Dynein heavy chain-like protein 1 (5065 aa).

The interval 1 to 1957 is stem; sequence MELEKTHLIN…IIKMADATFE (1957 aa). A coiled-coil region spans residues 1677–1705; sequence QMEGFQKQLDRLSDSLSKIQKALGEYLEK. The AAA 1 stretch occupies residues 1958–2179; the sequence is YGYEYLGMCE…LRSLKSVLNS (222 aa). 1996 to 2003 contributes to the ATP binding site; that stretch reads GPAGTGKT. Residues 2203-2223 form a disordered region; it reads FNETLDNNNNNDNNNERKTTT. Residues 2204-2215 are compositionally biased toward low complexity; that stretch reads NETLDNNNNNDN. AAA regions lie at residues 2281–2632, 2751–3004, and 3097–3367; these read NEIH…YEYI, DVDR…WKLA, and IFNE…GNRY. 2319–2326 provides a ligand contact to ATP; it reads GDVGTGKS. The interval 2507 to 2529 is disordered; that stretch reads EKNQNGNENGNENEKKNINIINN. Residues 2790–2797 and 3135–3142 each bind ATP; these read GPPGSGKT and GASGAGKT. The interval 3386 to 3701 is stalk; sequence IDEKKEEVSS…ETFINLEEAS (316 aa). Coiled coils occupy residues 3388–3466 and 3970–3997; these read EKKE…LDEQ and TMEK…EVEN. AAA regions lie at residues 3754–3983 and 4289–4507; these read LSRP…EASK and FNKI…VVDS. Residues 4686 to 4705 show a composition bias toward basic and acidic residues; the sequence is KDKNKDEDKNKNKENDDNNK. A disordered region spans residues 4686–4727; the sequence is KDKNKDEDKNKNKENDDNNKKHIGNNKLVISSSERTESETSE.

Belongs to the dynein heavy chain family. In terms of assembly, consists of at least two heavy chains and a number of intermediate and light chains.

The protein localises to the cytoplasm. It is found in the cytoskeleton. Acts as a motor for the intracellular retrograde motility of vesicles and organelles along microtubules. Dynein has ATPase activity; the force-producing power stroke is thought to occur on release of ADP. This chain is Dynein heavy chain-like protein 1, found in Plasmodium falciparum (isolate 3D7).